Here is a 390-residue protein sequence, read N- to C-terminus: GTPase Obg (390 aa).

The 159-residue stretch at 1-159 (MKFIDESLIR…RDLLLELMLL (159 aa)) folds into the Obg domain. Positions 160–333 (ADVGMLGLPN…LCRDIMDFII (174 aa)) constitute an OBG-type G domain. Residues 166-173 (GLPNAGKS), 191-195 (FTTLV), 213-216 (DIPG), 283-286 (NKID), and 314-316 (SAA) contribute to the GTP site. Mg(2+) contacts are provided by serine 173 and threonine 193.

Belongs to the TRAFAC class OBG-HflX-like GTPase superfamily. OBG GTPase family. As to quaternary structure, monomer. Requires Mg(2+) as cofactor.

Its subcellular location is the cytoplasm. An essential GTPase which binds GTP, GDP and possibly (p)ppGpp with moderate affinity, with high nucleotide exchange rates and a fairly low GTP hydrolysis rate. Plays a role in control of the cell cycle, stress response, ribosome biogenesis and in those bacteria that undergo differentiation, in morphogenesis control. In Haemophilus influenzae (strain 86-028NP), this protein is GTPase Obg.